A 621-amino-acid polypeptide reads, in one-letter code: Kelch-like protein 40 (621 aa).

The BTB domain occupies leucine 33–glutamate 98. The region spanning cysteine 133–glutamate 239 is the BACK domain. Residues isoleucine 265–aspartate 295 are disordered. Basic and acidic residues predominate over residues lysine 275–alanine 292. Kelch repeat units follow at residues glutamine 360–asparagine 412, serine 413–aspartate 462, leucine 463–glycine 510, isoleucine 512–glycine 557, and leucine 559–leucine 613.

The protein belongs to the KLHL40 family. As to quaternary structure, component of the BCR(KLHL40) E3 ubiquitin ligase complex, at least composed of CUL3, KLHL40 and RBX1. Interacts with LMOD3. As to expression, highly expressed in fetal (19, 23 and 31 weeks of gestation) and adult skeletal muscle; expression levels tend to be higher in fetal compared to postnatal muscles (at protein level). Also expressed in fetal and adult heart.

It is found in the cytoplasm. The protein localises to the myofibril. It localises to the sarcomere. The protein resides in the a band. Its subcellular location is the i band. In terms of biological role, substrate-specific adapter of a BCR (BTB-CUL3-RBX1) E3 ubiquitin ligase complex that acts as a key regulator of skeletal muscle development. The BCR(KLHL40) complex acts by mediating ubiquitination and degradation of TFDP1, thereby regulating the activity of the E2F:DP transcription factor complex. Promotes stabilization of LMOD3 by acting as a negative regulator of LMOD3 ubiquitination; the molecular process by which it negatively regulates ubiquitination of LMOD3 is however unclear. The protein is Kelch-like protein 40 of Homo sapiens (Human).